Here is a 537-residue protein sequence, read N- to C-terminus: Copine-1 (537 aa).

C2 domains are found at residues 1–114 (MAHC…TLPL) and 123–245 (GRGT…ECIH). Ca(2+)-binding residues include aspartate 21, aspartate 27, aspartate 80, aspartate 82, aspartate 92, aspartate 153, and aspartate 159. Lysine 171 carries the post-translational modification N6-acetyllysine. Ca(2+) is bound by residues aspartate 214, aspartate 216, and aspartate 222. A VWFA domain is found at 285-505 (NFTVGVDFTG…ALAQTVLAEV (221 aa)).

Belongs to the copine family. Homodimer; homodimerizes via its C2 domains. Interacts with p65/RELA (via N-terminus); this interaction induces proteolytic cleavage of p65/RELA subunit and inhibition of NF-kappa-B transcriptional activity. Interacts (via VWFA domain) with ACTB, CCDC22, MYCBP2, PPP5C, RDX and UBE2O. It depends on Ca(2+) as a cofactor. In terms of tissue distribution, expressed in liver, spleen, muscle, testis, adrenal (at protein level).

It is found in the nucleus. It localises to the cytoplasm. Its subcellular location is the cell membrane. Its function is as follows. Calcium-dependent phospholipid-binding protein that plays a role in calcium-mediated intracellular processes. Involved in the TNF-alpha receptor signaling pathway in a calcium-dependent manner. Exhibits calcium-dependent phospholipid binding properties. Plays a role in neuronal progenitor cell differentiation; induces neurite outgrowth via a AKT-dependent signaling cascade and calcium-independent manner. May recruit target proteins to the cell membrane in a calcium-dependent manner. May function in membrane trafficking. Involved in TNF-alpha-induced NF-kappa-B transcriptional repression by inducing endoprotease processing of the transcription factor NF-kappa-B p65/RELA subunit. Also induces endoprotease processing of NF-kappa-B p50/NFKB1, p52/NFKB2, RELB and REL. The protein is Copine-1 of Bos taurus (Bovine).